The primary structure comprises 281 residues: Plasmanylethanolamine desaturase (281 aa).

Residues 1–28 (MKTQEIEKKVRQQDAQVLAQGYSPAIRA) are Cytoplasmic-facing. Residues 29–45 (MEIAAIVSFVSLEVALV) traverse the membrane as a helical segment. The Periplasmic portion of the chain corresponds to 46–58 (YRLWGTPYAGTWL). Residues 59–75 (LLSAVLLGYLAADFVSG) traverse the membrane as a helical segment. Residues 76–123 (FVHWMGDTWGSTEMPVLGKALIRPFREHHVDEKAITRHDFVETNGNNC) lie on the Cytoplasmic side of the membrane. The helical transmembrane segment at 124–138 (LISLPVAIIALCLPM) threads the bilayer. At 139 to 142 (SGPG) the chain is on the periplasmic side. Residues 143–159 (WVFCASFLGAMIFWVMA) traverse the membrane as a helical segment. The Cytoplasmic portion of the chain corresponds to 160-281 (TNQFHKWSHM…VQEKPASTRP (122 aa)). Positions 164–168 (HKWSH) match the Histidine box-1 motif. Residues 191–195 (HRIHH) carry the Histidine box-2 motif.

The protein belongs to the fatty acid desaturase CarF family. In terms of assembly, interacts with CarR.

The protein resides in the cell inner membrane. It catalyses the reaction a 1-(1,2-saturated alkyl)-2-acyl-sn-glycero-3-phosphoethanolamine + 2 Fe(II)-[cytochrome b5] + O2 + 2 H(+) = a 1-O-(1Z-alkenyl)-2-acyl-sn-glycero-3-phosphoethanolamine + 2 Fe(III)-[cytochrome b5] + 2 H2O. The enzyme catalyses 1-O-(13-methyltetradecyl)-2-(13-methyltetradecanoyl)-sn-glycero-3-phosphoethanolamine + 2 Fe(II)-[cytochrome b5] + O2 + 2 H(+) = 1-O-(1Z-13-methyltetradecenyl)-2-(13-methyltetradecanoyl)-sn-glycero-3-phosphoethanolamine + 2 Fe(III)-[cytochrome b5] + 2 H2O. In terms of biological role, plasmanylethanolamine desaturase involved in plasmalogen biogenesis in the membrane, required for light-induced carotenogenesis. Plasmalogens are glycerophospholipids with a hydrocarbon chain linked by a vinyl ether bond at the glycerol sn-1 position, and are involved in antioxidative and signaling mechanisms, most precisely in sensing photooxidative stress through singlet oxygen. Participates in the light-dependent inactivation of the antisigma factor CarR. Mediates signaling by singlet oxygen, generated via photoexcited protoporphyrin IX. This is Plasmanylethanolamine desaturase from Myxococcus xanthus.